The chain runs to 226 residues: MSSQTPVVTVDGPSGAGKGTLCMLLSKKLGFQLLDSGAIYRVLALAAIHHGVDTESEDALVPLATHLDVQFVAEGDLVKVILEGEDVSKELRKEETGMAASKVAALPRVREALLRRQRAFEAAPGLVADGRDMGTVVFPNAKAKIFLDASAEERAHRRLKQLQDKGLDVRFDDLLSEIQERDDRDRNRPVAPLCPAEDALVLDSTSMSIDEVVEKALQYIESKLAE.

12–20 (GPSGAGKGT) contributes to the ATP binding site.

This sequence belongs to the cytidylate kinase family. Type 1 subfamily.

The protein resides in the cytoplasm. It catalyses the reaction CMP + ATP = CDP + ADP. It carries out the reaction dCMP + ATP = dCDP + ADP. In Vibrio vulnificus (strain YJ016), this protein is Cytidylate kinase.